Consider the following 625-residue polypeptide: DNA mismatch repair protein MutL (625 aa).

The segment at 404-427 (PPPRNAPQSTGMPSMAGTGLPATS) is disordered.

The protein belongs to the DNA mismatch repair MutL/HexB family.

Its function is as follows. This protein is involved in the repair of mismatches in DNA. It is required for dam-dependent methyl-directed DNA mismatch repair. May act as a 'molecular matchmaker', a protein that promotes the formation of a stable complex between two or more DNA-binding proteins in an ATP-dependent manner without itself being part of a final effector complex. The protein is DNA mismatch repair protein MutL of Xanthomonas oryzae pv. oryzae (strain MAFF 311018).